A 186-amino-acid polypeptide reads, in one-letter code: Fanconi anemia core complex-associated protein 20 (186 aa).

Disordered regions lie at residues 1-30 (MEEE…PWFL) and 50-90 (TADW…GSKT). A compositionally biased stretch (basic residues) spans 7–16 (LRGRLSRRRP). Residue S119 is modified to Phosphoserine. The UBZ2-type zinc-finger motif lies at 150–186 (LLSCPLCQKAFDPKLTQLDVDSHLAQCLAECTEDVVW). Zn(2+) is bound by residues C153, C156, H172, and C176.

Component of the Fanconi anemia (FA) complex. Interacts with FANCA; interaction is direct. Interacts with REV1.

The protein resides in the nucleus. It localises to the chromosome. Component of the Fanconi anemia (FA) complex required to recruit the FA complex to DNA interstrand cross-links (ICLs) and promote ICLs repair. Following DNA damage recognizes and binds 'Lys-63'-linked ubiquitin generated by RNF8 at ICLs and recruits other components of the FA complex. Promotes translesion synthesis via interaction with REV1. In Mus musculus (Mouse), this protein is Fanconi anemia core complex-associated protein 20.